The following is a 677-amino-acid chain: Methionine--tRNA ligase (677 aa).

The short motif at 15–25 is the 'HIGH' region element; sequence PYANGSIHLGH. The Zn(2+) site is built by cysteine 146, cysteine 149, cysteine 159, and cysteine 162. Positions 333–337 match the 'KMSKS' region motif; the sequence is KMSKS. Lysine 336 contributes to the ATP binding site. The tRNA-binding domain occupies 575-677; it reads DFAKVDLRVA…DGAKPGQQVK (103 aa).

The protein belongs to the class-I aminoacyl-tRNA synthetase family. MetG type 1 subfamily. In terms of assembly, homodimer. Zn(2+) is required as a cofactor.

It is found in the cytoplasm. It catalyses the reaction tRNA(Met) + L-methionine + ATP = L-methionyl-tRNA(Met) + AMP + diphosphate. Is required not only for elongation of protein synthesis but also for the initiation of all mRNA translation through initiator tRNA(fMet) aminoacylation. The protein is Methionine--tRNA ligase of Klebsiella pneumoniae subsp. pneumoniae (strain ATCC 700721 / MGH 78578).